The primary structure comprises 537 residues: CTP synthase (537 aa).

An amidoligase domain region spans residues 1–265 (MVHFIFVTGG…DNKVLKFFNI (265 aa)). S13 serves as a coordination point for CTP. S13 serves as a coordination point for UTP. Residues 14–19 (SLGKGL) and D71 each bind ATP. D71 and E139 together coordinate Mg(2+). CTP is bound by residues 146–148 (DIE) and K222. K222 is a UTP binding site. In terms of domain architecture, Glutamine amidotransferase type-1 spans 290–536 (RIAIIAKYHK…IKAAIEYNKC (247 aa)). G352 is an L-glutamine binding site. Residue C379 is the Nucleophile; for glutamine hydrolysis of the active site. L-glutamine-binding positions include 380–383 (FGMQ), E403, and R464. Residues H509 and E511 contribute to the active site.

It belongs to the CTP synthase family. Homotetramer.

The enzyme catalyses UTP + L-glutamine + ATP + H2O = CTP + L-glutamate + ADP + phosphate + 2 H(+). It catalyses the reaction L-glutamine + H2O = L-glutamate + NH4(+). It carries out the reaction UTP + NH4(+) + ATP = CTP + ADP + phosphate + 2 H(+). The protein operates within pyrimidine metabolism; CTP biosynthesis via de novo pathway; CTP from UDP: step 2/2. Allosterically activated by GTP, when glutamine is the substrate; GTP has no effect on the reaction when ammonia is the substrate. The allosteric effector GTP functions by stabilizing the protein conformation that binds the tetrahedral intermediate(s) formed during glutamine hydrolysis. Inhibited by the product CTP, via allosteric rather than competitive inhibition. Catalyzes the ATP-dependent amination of UTP to CTP with either L-glutamine or ammonia as the source of nitrogen. Regulates intracellular CTP levels through interactions with the four ribonucleotide triphosphates. The chain is CTP synthase from Rickettsia peacockii (strain Rustic).